The following is a 1070-amino-acid chain: DNA-directed RNA polymerase subunit beta (1070 aa).

This sequence belongs to the RNA polymerase beta chain family. In terms of assembly, in plastids the minimal PEP RNA polymerase catalytic core is composed of four subunits: alpha, beta, beta', and beta''. When a (nuclear-encoded) sigma factor is associated with the core the holoenzyme is formed, which can initiate transcription.

The protein localises to the plastid. The protein resides in the chloroplast. The enzyme catalyses RNA(n) + a ribonucleoside 5'-triphosphate = RNA(n+1) + diphosphate. Its function is as follows. DNA-dependent RNA polymerase catalyzes the transcription of DNA into RNA using the four ribonucleoside triphosphates as substrates. In Lotus japonicus (Lotus corniculatus var. japonicus), this protein is DNA-directed RNA polymerase subunit beta.